Consider the following 307-residue polypeptide: Oxygen-dependent coproporphyrinogen-III oxidase (307 aa).

Residue S99 participates in substrate binding. Residues H103 and H113 each coordinate a divalent metal cation. H113 (proton donor) is an active-site residue. 115-117 (NVR) contributes to the substrate binding site. Positions 152 and 182 each coordinate a divalent metal cation. The important for dimerization stretch occupies residues 247–282 (YVEFNLVFDRGTLFGLQSGGRTESILMSMPPVANWR). 265–267 (GGR) provides a ligand contact to substrate.

Belongs to the aerobic coproporphyrinogen-III oxidase family. As to quaternary structure, homodimer. It depends on a divalent metal cation as a cofactor.

The protein localises to the cytoplasm. It catalyses the reaction coproporphyrinogen III + O2 + 2 H(+) = protoporphyrinogen IX + 2 CO2 + 2 H2O. The protein operates within porphyrin-containing compound metabolism; protoporphyrin-IX biosynthesis; protoporphyrinogen-IX from coproporphyrinogen-III (O2 route): step 1/1. Functionally, involved in the heme biosynthesis. Catalyzes the aerobic oxidative decarboxylation of propionate groups of rings A and B of coproporphyrinogen-III to yield the vinyl groups in protoporphyrinogen-IX. This is Oxygen-dependent coproporphyrinogen-III oxidase from Burkholderia multivorans (strain ATCC 17616 / 249).